We begin with the raw amino-acid sequence, 260 residues long: Large ribosomal subunit protein uL2 (260 aa).

Positions 1 to 24 are disordered; it reads MGRVIRAQRKGAGSVFKSHTHHRK.

It belongs to the universal ribosomal protein uL2 family.

It localises to the cytoplasm. The sequence is that of Large ribosomal subunit protein uL2 (RPL8) from Solanum lycopersicum (Tomato).